A 714-amino-acid polypeptide reads, in one-letter code: Fumarate reductase flavoprotein subunit (714 aa).

Residues 13-16, 42-44, and 49-50 each bind FAD; these read GGLA, SHS, and GG. Position 43 is a tele-8alpha-FAD histidine (H43). Active-site residues include H257 and R273. Residues E420 and 436–437 each bind FAD; that span reads SV.

Belongs to the FAD-dependent oxidoreductase 2 family. FRD/SDH subfamily. Part of an enzyme complex containing three subunits: a flavoprotein (frdA), an iron-sulfur protein (frdB), and diheme cytochrome b (frdC). FAD is required as a cofactor.

Its subcellular location is the cell inner membrane. The catalysed reaction is a quinone + succinate = fumarate + a quinol. Functionally, the fumarate reductase enzyme complex is required for fumarate respiration. The polypeptide is Fumarate reductase flavoprotein subunit (frdA) (Helicobacter pylori (strain J99 / ATCC 700824) (Campylobacter pylori J99)).